A 130-amino-acid polypeptide reads, in one-letter code: Ribosome-binding factor A (130 aa).

This sequence belongs to the RbfA family. Monomer. Binds 30S ribosomal subunits, but not 50S ribosomal subunits or 70S ribosomes.

Its subcellular location is the cytoplasm. Its function is as follows. One of several proteins that assist in the late maturation steps of the functional core of the 30S ribosomal subunit. Associates with free 30S ribosomal subunits (but not with 30S subunits that are part of 70S ribosomes or polysomes). Required for efficient processing of 16S rRNA. May interact with the 5'-terminal helix region of 16S rRNA. The protein is Ribosome-binding factor A of Flavobacterium psychrophilum (strain ATCC 49511 / DSM 21280 / CIP 103535 / JIP02/86).